Here is a 960-residue protein sequence, read N- to C-terminus: Leucine-rich repeat receptor-like serine/threonine-protein kinase SKM1 (960 aa).

The signal sequence occupies residues 1 to 29 (MSTSHHHHHPPYLITTLFFLFLNFSCLHA). At 30–634 (NELELLLSFK…VRKRSTKSWW (605 aa)) the chain is on the extracellular side. C61 and C68 form a disulfide bridge. 6 N-linked (GlcNAc...) asparagine glycosylation sites follow: N70, N83, N103, N108, N129, and N134. LRR repeat units follow at residues 71–96 (ISRV…TFRL), 97–120 (PFLQ…IFTT), 122–146 (SPSL…FLPN), 149–168 (TLDL…IGVF), 169–194 (SNLR…NLSR), 196–216 (EFLT…LGKM), 217–240 (KNLK…IGGL), 241–264 (SSLN…LGDL), 265–288 (KKLE…IFSL), 290–312 (NLIS…VAQM), 313–336 (QSLE…VTSL), 338–360 (RLKV…LGKH), 361–384 (NNLT…LCDS), 386–408 (HLTK…LGMC), 409–432 (QSLE…FTKL), 434–454 (LVNF…TWDM), 455–477 (PQLE…FSRS), 478–501 (KRLK…LMTF), 503–525 (EIMD…LSSC), 526–549 (KNLV…FAEF), 550–573 (QVLS…LGNI), and 575–598 (SLVQ…AFLA). N-linked (GlcNAc...) asparagine glycosylation is present at N191. The CLE45 peptide binding signature appears at 221–226 (WIYLGY). 2 N-linked (GlcNAc...) asparagine glycosylation sites follow: N228 and N252. The N-linked (GlcNAc...) asparagine glycan is linked to N324. N362 and N372 each carry an N-linked (GlcNAc...) asparagine glycan. Residue N537 is glycosylated (N-linked (GlcNAc...) asparagine). N-linked (GlcNAc...) asparagine glycans are attached at residues N580 and N600. The chain crosses the membrane as a helical span at residues 635–655 (LIITSTFAAFLAVLVSGFFIV). Topologically, residues 656-960 (LVFQRTHNVL…TYLSKILSLA (305 aa)) are cytoplasmic. The Protein kinase domain maps to 691 to 953 (FTVNTILSSL…SSSSSCTTYL (263 aa)). Residue T692 is modified to Phosphothreonine. ATP contacts are provided by residues 697–705 (LSSLKDQNV) and K717. Phosphotyrosine is present on Y834.

Belongs to the protein kinase superfamily. Ser/Thr protein kinase family. As to quaternary structure, self-interacts. Binds to CLE45 present in the pistil, particularly under relatively high temperature (at 30 degrees Celsius). Expressed in pollen grains and roots vascular tissues. Present in roots.

The protein localises to the cell membrane. It catalyses the reaction L-seryl-[protein] + ATP = O-phospho-L-seryl-[protein] + ADP + H(+). The catalysed reaction is L-threonyl-[protein] + ATP = O-phospho-L-threonyl-[protein] + ADP + H(+). Its function is as follows. Receptor with a serine/threonine-protein kinase activity. Together with SKM2, LRR-rich receptor-like kinase (LRR-RLK) required for male fertility by the perception of CLE43 and CLE45 peptides and the transduction of their promoting action in pollen tubes, especially under relatively high temperature (at 30 degrees Celsius), thus conferring tolerance against high temperature probably through the maintenance of mitochondrial activity. Seems to not be involved in the perception of CLE45 peptide in roots. In Arabidopsis thaliana (Mouse-ear cress), this protein is Leucine-rich repeat receptor-like serine/threonine-protein kinase SKM1.